Reading from the N-terminus, the 450-residue chain is 23S rRNA (uracil(1939)-C(5))-methyltransferase RlmD (450 aa).

Positions 1–62 (MPVAGPLEIV…PSYEQATLVD (62 aa)) constitute a TRAM domain. The [4Fe-4S] cluster site is built by cysteine 75, cysteine 81, cysteine 84, and cysteine 163. S-adenosyl-L-methionine-binding residues include glutamine 271, phenylalanine 300, asparagine 305, glutamate 321, asparagine 349, and aspartate 370. The active-site Nucleophile is the cysteine 406.

Belongs to the class I-like SAM-binding methyltransferase superfamily. RNA M5U methyltransferase family. RlmD subfamily.

The catalysed reaction is uridine(1939) in 23S rRNA + S-adenosyl-L-methionine = 5-methyluridine(1939) in 23S rRNA + S-adenosyl-L-homocysteine + H(+). Its function is as follows. Catalyzes the formation of 5-methyl-uridine at position 1939 (m5U1939) in 23S rRNA. The sequence is that of 23S rRNA (uracil(1939)-C(5))-methyltransferase RlmD from Ralstonia nicotianae (strain ATCC BAA-1114 / GMI1000) (Ralstonia solanacearum).